We begin with the raw amino-acid sequence, 325 residues long: 5-dehydro-2-deoxygluconokinase (325 aa).

Belongs to the carbohydrate kinase PfkB family.

The catalysed reaction is 5-dehydro-2-deoxy-D-gluconate + ATP = 6-phospho-5-dehydro-2-deoxy-D-gluconate + ADP + H(+). Its pathway is polyol metabolism; myo-inositol degradation into acetyl-CoA; acetyl-CoA from myo-inositol: step 5/7. Its function is as follows. Catalyzes the phosphorylation of 5-dehydro-2-deoxy-D-gluconate (2-deoxy-5-keto-D-gluconate or DKG) to 6-phospho-5-dehydro-2-deoxy-D-gluconate (DKGP). In Listeria monocytogenes serovar 1/2a (strain ATCC BAA-679 / EGD-e), this protein is 5-dehydro-2-deoxygluconokinase.